The following is a 719-amino-acid chain: Glutamate--tRNA ligase, cytoplasmic (719 aa).

An ATP-binding site is contributed by S93. A disordered region spans residues 176–205 (SGKPVAAPKSKDSQQAVKGDGQDKGKPEVD). Basic and acidic residues predominate over residues 195–204 (DGQDKGKPEV). Position 217 to 219 (217 to 219 (RFA)) interacts with L-glutamate. Positions 220–230 (PEPSGYLHIGH) match the 'HIGH' region motif. H227 contributes to the ATP binding site. L-glutamate contacts are provided by residues 393 to 397 (YDFAC) and R411. Residues E414 and 448–452 (LLSKR) contribute to the ATP site. The 'KMSKS' region signature appears at 448–452 (LLSKR).

The protein belongs to the class-I aminoacyl-tRNA synthetase family. Glutamate--tRNA ligase type 2 subfamily. In terms of assembly, interacts with GLN2, COL4 and RPP13L4/ZAR1.

The protein resides in the cytoplasm. It localises to the cytosol. The catalysed reaction is tRNA(Glu) + L-glutamate + ATP = L-glutamyl-tRNA(Glu) + AMP + diphosphate. Its function is as follows. Catalyzes the attachment of glutamate to tRNA(Glu) in a two-step reaction: glutamate is first activated by ATP to form Glu-AMP and then transferred to the acceptor end of tRNA(Glu). This is Glutamate--tRNA ligase, cytoplasmic from Arabidopsis thaliana (Mouse-ear cress).